We begin with the raw amino-acid sequence, 333 residues long: Taste receptor type 2 member 38 (333 aa).

Over 1–17 (MLTLTRIHTVSYEVRST) the chain is Extracellular. The helical transmembrane segment at 18–38 (FLFISVLEFAVGFLTNAFVFL) threads the bilayer. The Cytoplasmic segment spans residues 39 to 55 (VNFWDVVKRQPLSNSDC). The chain crosses the membrane as a helical span at residues 56 to 76 (VLLCLSISRLFLHGLLFLSAI). Topologically, residues 77–94 (QLTHFQKLSEPLNHSYQA) are extracellular. A helical transmembrane segment spans residues 95 to 115 (INMLWMIANQANLWLAACLSL). The Cytoplasmic portion of the chain corresponds to 116–142 (LYCSKLIRFSHTFLICLASWVSRKISQ). A helical membrane pass occupies residues 143–163 (MLLGIILCSCICTVLCVWCFF). Residues 164–190 (SRPHFTVTTVLFMNNNTRLNWQIKDLN) are Extracellular-facing. Residue asparagine 178 is glycosylated (N-linked (GlcNAc...) asparagine). The helical transmembrane segment at 191–211 (LFYSFLFCYLWSVPPFLLFLV) threads the bilayer. Residues 212 to 251 (SSGMLTVSLGRHMRTMKVYTRDSRDPSLEAHIKALKSLVS) lie on the Cytoplasmic side of the membrane. A helical transmembrane segment spans residues 252–272 (FFCFFVISSCAAFISVPLLIL). The Extracellular segment spans residues 273-276 (WRDK). The chain crosses the membrane as a helical span at residues 277 to 297 (IGVMVCVGIMAACPSGHAAVL). Residues 298-333 (ISGNAKLRRAVTTILLWAQSSLKVRADHKADSRTLC) lie on the Cytoplasmic side of the membrane.

Belongs to the G-protein coupled receptor T2R family.

The protein resides in the membrane. Receptor that may play a role in the perception of bitterness and is gustducin-linked. May play a role in sensing the chemical composition of the gastrointestinal content. The activity of this receptor may stimulate alpha gustducin, mediate PLC-beta-2 activation and lead to the gating of TRPM5. This chain is Taste receptor type 2 member 38 (TAS2R38), found in Pan paniscus (Pygmy chimpanzee).